Here is a 292-residue protein sequence, read N- to C-terminus: MKQIAFYGKGGIGKSTTVCNIAAALADQGKKVMVVGCDPKHDCTSNLRGGQEIPTVLDILREKGLDKLGLETIIEKEMIEINDIIYEGYNGIYCVEAGGPKPGYGCAGRGVIVVIDLLKKMNLYKDLKLDIVLYDVLGDVVCGGFAMPLRMGLAEQIYVVTSSDYMAIYAANNICRGISEFVKRGGSKLGGLIYNVRGSMDAYDIINEFADKLGANIVGKVPNSHLIPEAEIEGKTVIEYDPNDEISQVYRELAKKIYENNEGTIPKPLENIEIMTIGKKIKERLKKERMKN.

8–15 (GKGGIGKS) lines the ATP pocket. Cys-106 lines the [4Fe-4S] cluster pocket. Arg-109 bears the ADP-ribosylarginine; by dinitrogenase reductase ADP-ribosyltransferase mark. Cys-142 contacts [4Fe-4S] cluster.

Belongs to the NifH/BchL/ChlL family. As to quaternary structure, homodimer. [4Fe-4S] cluster serves as cofactor. In terms of processing, the reversible ADP-ribosylation of Arg-109 inactivates the nitrogenase reductase and regulates nitrogenase activity.

The catalysed reaction is N2 + 8 reduced [2Fe-2S]-[ferredoxin] + 16 ATP + 16 H2O = H2 + 8 oxidized [2Fe-2S]-[ferredoxin] + 2 NH4(+) + 16 ADP + 16 phosphate + 6 H(+). The key enzymatic reactions in nitrogen fixation are catalyzed by the nitrogenase complex, which has 2 components: the iron protein and the molybdenum-iron protein. The protein is Nitrogenase iron protein 2 (nifH2) of Methanothermococcus thermolithotrophicus (Methanococcus thermolithotrophicus).